Consider the following 271-residue polypeptide: Shikimate dehydrogenase (NADP(+)) (271 aa).

Shikimate-binding positions include 14–16 (SKS) and Thr-61. The Proton acceptor role is filled by Lys-65. 2 residues coordinate shikimate: Asn-86 and Asp-102. NADP(+)-binding positions include 126–130 (GAGGA), 149–154 (NRTFSR), and Met-213. Position 215 (Tyr-215) interacts with shikimate. Gly-238 serves as a coordination point for NADP(+).

The protein belongs to the shikimate dehydrogenase family. As to quaternary structure, homodimer.

It carries out the reaction shikimate + NADP(+) = 3-dehydroshikimate + NADPH + H(+). The protein operates within metabolic intermediate biosynthesis; chorismate biosynthesis; chorismate from D-erythrose 4-phosphate and phosphoenolpyruvate: step 4/7. Its function is as follows. Involved in the biosynthesis of the chorismate, which leads to the biosynthesis of aromatic amino acids. Catalyzes the reversible NADPH linked reduction of 3-dehydroshikimate (DHSA) to yield shikimate (SA). This is Shikimate dehydrogenase (NADP(+)) from Histophilus somni (strain 2336) (Haemophilus somnus).